Consider the following 190-residue polypeptide: dCTP deaminase (190 aa).

DCTP-binding positions include Lys111–Arg116, Thr135–Glu137, Gln156, Tyr172, and Gln182. Glu137 serves as the catalytic Proton donor/acceptor.

Belongs to the dCTP deaminase family. Homotrimer.

The enzyme catalyses dCTP + H2O + H(+) = dUTP + NH4(+). Its pathway is pyrimidine metabolism; dUMP biosynthesis; dUMP from dCTP (dUTP route): step 1/2. Functionally, catalyzes the deamination of dCTP to dUTP. The sequence is that of dCTP deaminase from Stenotrophomonas maltophilia (strain K279a).